The primary structure comprises 828 residues: Molybdenum cofactor sulfurase (828 aa).

Lysine 239 bears the N6-(pyridoxal phosphate)lysine mark. Cysteine 402 is a catalytic residue. The tract at residues 638–682 (TRYTRRSLHSRSSTAALRRQRPVEESSMPGSFPSDTPLSRTPEPP) is disordered. The region spanning 652–825 (AALRRQRPVE…VMVGDVVRPW (174 aa)) is the MOSC domain.

Belongs to the class-V pyridoxal-phosphate-dependent aminotransferase family. MOCOS subfamily. Requires pyridoxal 5'-phosphate as cofactor.

The catalysed reaction is Mo-molybdopterin + L-cysteine + AH2 = thio-Mo-molybdopterin + L-alanine + A + H2O. Sulfurates the molybdenum cofactor. Sulfation of molybdenum is essential for xanthine dehydrogenase (XDH) and aldehyde oxidase (ADO) enzymes in which molybdenum cofactor is liganded by 1 oxygen and 1 sulfur atom in active form. The polypeptide is Molybdenum cofactor sulfurase (Aspergillus terreus (strain NIH 2624 / FGSC A1156)).